We begin with the raw amino-acid sequence, 265 residues long: Transcription factor LBX1 (265 aa).

A compositionally biased stretch (basic and acidic residues) spans 1–20; the sequence is MTSKDEAKSSSVEERRRHAL. The interval 1-33 is disordered; it reads MTSKDEAKSSSVEERRRHALDLLPPPANSNKPL. The segment at residues 125 to 184 is a DNA-binding region (homeobox); that stretch reads RRKSRTAFTNHQIYELEKRFLYQKYLSPADRDQIAQQLGLTNAQVITWFQNRRAKLKRDL. Residues 212–265 form a disordered region; sequence EEETNSVRDDSRSRSPQLGLSGHMPLSPSSPLTEQHTSKECSEDEEDVEIDVDD. The segment covering 253-265 has biased composition (acidic residues); it reads SEDEEDVEIDVDD.

It localises to the nucleus. Functionally, transcription factor that controls hypaxial muscle development by down-regulating myod1 and cdkn1b/p27, thereby allowing myoblasts to proliferate before the onset of terminal differentiation. The polypeptide is Transcription factor LBX1 (Xenopus tropicalis (Western clawed frog)).